The primary structure comprises 473 residues: ATP synthase subunit beta (473 aa).

153 to 160 (GGAGVGKT) provides a ligand contact to ATP.

The protein belongs to the ATPase alpha/beta chains family. F-type ATPases have 2 components, CF(1) - the catalytic core - and CF(0) - the membrane proton channel. CF(1) has five subunits: alpha(3), beta(3), gamma(1), delta(1), epsilon(1). CF(0) has three main subunits: a(1), b(2) and c(9-12). The alpha and beta chains form an alternating ring which encloses part of the gamma chain. CF(1) is attached to CF(0) by a central stalk formed by the gamma and epsilon chains, while a peripheral stalk is formed by the delta and b chains.

Its subcellular location is the cell inner membrane. It catalyses the reaction ATP + H2O + 4 H(+)(in) = ADP + phosphate + 5 H(+)(out). In terms of biological role, produces ATP from ADP in the presence of a proton gradient across the membrane. The catalytic sites are hosted primarily by the beta subunits. The polypeptide is ATP synthase subunit beta (Rickettsia conorii (strain ATCC VR-613 / Malish 7)).